Reading from the N-terminus, the 177-residue chain is ATP synthase subunit delta (177 aa).

It belongs to the ATPase delta chain family. F-type ATPases have 2 components, F(1) - the catalytic core - and F(0) - the membrane proton channel. F(1) has five subunits: alpha(3), beta(3), gamma(1), delta(1), epsilon(1). F(0) has three main subunits: a(1), b(2) and c(10-14). The alpha and beta chains form an alternating ring which encloses part of the gamma chain. F(1) is attached to F(0) by a central stalk formed by the gamma and epsilon chains, while a peripheral stalk is formed by the delta and b chains.

It is found in the cell inner membrane. Its function is as follows. F(1)F(0) ATP synthase produces ATP from ADP in the presence of a proton or sodium gradient. F-type ATPases consist of two structural domains, F(1) containing the extramembraneous catalytic core and F(0) containing the membrane proton channel, linked together by a central stalk and a peripheral stalk. During catalysis, ATP synthesis in the catalytic domain of F(1) is coupled via a rotary mechanism of the central stalk subunits to proton translocation. In terms of biological role, this protein is part of the stalk that links CF(0) to CF(1). It either transmits conformational changes from CF(0) to CF(1) or is implicated in proton conduction. This chain is ATP synthase subunit delta, found in Vibrio cholerae serotype O1 (strain ATCC 39541 / Classical Ogawa 395 / O395).